We begin with the raw amino-acid sequence, 1926 residues long: MATRRAIVPEQQQEPSSPASEISKNKDGQEQSEMVSPMEEEGFCWPGPKSVALRRTSDGFGFTLRHFIVYPPESAVHTSIKDEENGNRGVNTGRPRNKLEPMDTIFVKQVKEGGPAHEAGLCTGDRIIKVNGESVIGKTYSQVIALIQNSDSTLELSVMPKDEDILQLAYSQDAYLKGNDSYSGNAHHIPEPPPLCYPRIKPAASVMAQPVEVPPSGTSLAKQQSSRPVRTATTQPDRSYRVEIQVPPSPTELVKSNTAVCVCNEAVRTVLVPSEKVVDLSSNRTNRAGPLHRTEEVRYGLADPSILKRTTSPTSSIPHVQMVPTARQFDNAGVIGKPPSYGGHAENMFSTRPTAQAEGSPSPTNHYSSPGPHQQIDWRNYKTYKEYIDNRRMQMYGCRTIQERLDSLKAASQTTTDYNQMLPNHFSGQSRRRSTSHDRVQQSVQMRQRSVSQERLEDPVLMKEWPRSASQDTLSSAVASRNHRSESWDYHARKGDFDQFIVETQSNGERKHNYKWSGFTEQDDRRGITERPRQHSFHMSLRSPNFTMAPVPYTSFAHPLQKVHPDVKTIQPTRQNSYRSPHPRPAVSDRSGFAVSKSNSVKIPTPCASKSYSPSVRSDDGIVIDQKPVNYMHVSGPQNFQRKTQTESASGFQLDSVKTSMSASSSPPANTKPAKQVKHSTATSQNVDVKKTPSPEANAGDSDAVLTPVDQVVLREKPSPGQQTSPPIRQQSYIFAVNEQEGVSDTTCWLPNDARREVHIKRIEQRKASGSNSPGNSLASIPFIDEPTSPSIDHEIGNIPASAVISISEQPLPTITTVPPSPTSPVPLMRRHFSHDHDSIRPSILEVNSKTERSKSCDEGLDDYKEEGKLGLKQGSSLKGVQARENVPSSEDSESRKDSSSDVFSDSNKEGFLYFRQVTTEKGKRVSGSIRPWKQMYVVLRGSALYLQKDKKEQTGHSSAQSDEEQLIGINGCLIDISYSETKRKHVFRLTTSDREFLFQAEDRDDMLAWIKAIQENGNLNDEQTDQASRVLISKRIKEYNTMMSSASNKSEQSPKAPRQTLSIRQPFRATRPDGKLQSPHSPKQESERRLFSKDDISPPKDKGSWRRIMKNPFEKKPITGGTFGVRLDDCPPAHNNKYVPLIVDVCCKLVEERGLEATGIYRVPGNNAAISSMQEDLNKANTDIDIQDDKWRDLNVISSLLKSFFRKLPDPLFTNEKYNDFIEANRTEDPVERLKTLKRLILDLPDHHYETLKYLSAHLKTVADNAELNKMEPRNLAIVFGPTLVRTSEDNMTHMVTHMPDQYKIVETLIQKHDWFFSDESADEPITTVHEESTVESQPVPNIDHLLPNIGRTGLSPGDVSDSATSDSAKPKGSWGSGKDQYSRELLVSSLFAAASRKRKKPKDKPQPSSSEDELDNVFYQKELSQVEFQIPDKQNVDKDADLKAKANALSFKDADNIKGTNIITEDKLESDIMHSESTSPCLPKLLEPPKENHRLQVPSDDKTIPQISFQMEESMSDSGTMLSNSSQASAQRSKPKVVSPEFKGHDFLTADVSSITSDYSTTSSTIYMTGLDPNPISPEVQSVAESKGEEADDERSELISEGRPVETDSENDFHIFASSLAFNRQHRSKEEDPPRNVQANAEGSPSCTEGSITPRLDTRRFSSHKLIECDTLSRKKSVRLKTDSECSAESKNEETLSDAHEVMKKSRSPINVDTTANNEPEEPAWRIKITDRLKLRLKASADDMFGIGSQKAHAAETRKKKNIRRRHTLGGQRDFAEISVLNAWKINEPSSKEVELSAVDRLKPKCPSQDLSISDWLARERLRTSTSELSTVEPEEKHISETTGQKESVSPSPPPSSSPSQVSTADIPTGSESPSLGTAPQSDDQMNGDSFQSKNKNNFSPAVDAHPHKLSGTQVVRSRFYQYL.

The segment at 1-41 (MATRRAIVPEQQQEPSSPASEISKNKDGQEQSEMVSPMEEE) is disordered. Residues 10–22 (EQQQEPSSPASEI) show a composition bias toward polar residues. The region spanning 77-162 (HTSIKDEENG…TLELSVMPKD (86 aa)) is the PDZ domain. Disordered stretches follow at residues 211-236 (VEVP…TTQP), 353-378 (PTAQ…QIDW), 416-487 (TDYN…RSES), 571-592 (QPTR…DRSG), 640-704 (FQRK…DSDA), and 868-905 (GKLG…DVFS). 3 stretches are compositionally biased toward polar residues: residues 216 to 236 (SGTS…TTQP), 353 to 372 (PTAQ…SPGP), and 416 to 429 (TDYN…FSGQ). Low complexity predominate over residues 441 to 451 (QQSVQMRQRSV). A compositionally biased stretch (basic and acidic residues) spans 452–466 (SQERLEDPVLMKEWP). Positions 468–479 (SASQDTLSSAVA) are enriched in polar residues. Residues 640–669 (FQRKTQTESASGFQLDSVKTSMSASSSPPA) show a composition bias toward polar residues. One can recognise a PH domain in the interval 906-1019 (DSNKEGFLYF…WIKAIQENGN (114 aa)). A compositionally biased stretch (polar residues) spans 1044 to 1064 (MSSASNKSEQSPKAPRQTLSI). Residues 1044-1107 (MSSASNKSEQ…SPPKDKGSWR (64 aa)) are disordered. The segment covering 1083 to 1105 (PKQESERRLFSKDDISPPKDKGS) has biased composition (basic and acidic residues). In terms of domain architecture, Rho-GAP spans 1126–1318 (VRLDDCPPAH…TLIQKHDWFF (193 aa)). Disordered regions lie at residues 1330–1381 (VHEE…SGKD), 1396–1416 (ASRK…EDEL), 1512–1540 (QMEE…PKVV), 1573–1598 (LDPN…DERS), 1626–1658 (RQHR…TPRL), and 1827–1915 (STSE…LSGT). Positions 1512–1534 (QMEESMSDSGTMLSNSSQASAQR) are enriched in polar residues. Composition is skewed to polar residues over residues 1639 to 1653 (VQAN…TEGS) and 1866 to 1902 (TADI…NNFS).

The protein resides in the golgi apparatus membrane. The protein localises to the cell junction. It is found in the cytoplasmic vesicle membrane. Its subcellular location is the cytoplasm. It localises to the cytoskeleton. GTPase-activating protein (GAP) for rhoa and cdc42. The sequence is that of Rho GTPase-activating protein 21-A (arhgap21-a) from Xenopus laevis (African clawed frog).